We begin with the raw amino-acid sequence, 630 residues long: Plastin-1 (630 aa).

At Met-1 the chain carries N-acetylmethionine. 2 EF-hand domains span residues 11–46 (EELE…ASLP) and 51–86 (KVRE…LKSK). Ca(2+) is bound by residues Asp-24, Asp-26, Ser-28, Tyr-30, Glu-35, Asp-64, Asn-66, Asp-68, Arg-70, and Glu-75. Actin-binding stretches follow at residues 108–381 (TSSI…GLHK) and 382–626 (PDNN…GKGL). Calponin-homology (CH) domains lie at 122-238 (EEEK…KVGL), 266-377 (LSPE…NTYP), 396-505 (SKEE…RRYT), and 517-626 (KVND…GKGL).

In terms of assembly, monomer. In terms of processing, phosphorylated.

It localises to the cytoplasm. The protein resides in the cell projection. The protein localises to the stereocilium. Actin-bundling protein. In the inner ear, it is required for stereocilia formation. Mediates liquid packing of actin filaments that is necessary for stereocilia to grow to their proper dimensions. The protein is Plastin-1 (PLS1) of Bos taurus (Bovine).